A 354-amino-acid polypeptide reads, in one-letter code: Arginase (354 aa).

Mn(2+) is bound by residues H136, D159, H161, and D163. L-arginine is bound by residues N165, S172, and D217. Mn(2+) contacts are provided by D266 and D268.

It belongs to the arginase family. Homotrimer; oligomerization is dependent on Mn(2+) binding. The cofactor is Mn(2+).

The catalysed reaction is L-arginine + H2O = urea + L-ornithine. It functions in the pathway nitrogen metabolism; urea cycle; L-ornithine and urea from L-arginine: step 1/1. Catalyzes the hydrolysis of L-arginine into urea and L-ornithine, which is a precursor for polyamine biosynthesis. May play a role in parasite intra-hepatic development during the host liver stage. This is Arginase from Plasmodium berghei (strain Anka).